Consider the following 184-residue polypeptide: Photosystem I assembly protein Ycf4 (184 aa).

2 consecutive transmembrane segments (helical) span residues 22-42 and 57-77; these read FFWA…GTSS and ILFF…LFIS.

Belongs to the Ycf4 family.

Its subcellular location is the plastid. It is found in the chloroplast thylakoid membrane. Its function is as follows. Seems to be required for the assembly of the photosystem I complex. In Nandina domestica (Heavenly bamboo), this protein is Photosystem I assembly protein Ycf4.